A 170-amino-acid polypeptide reads, in one-letter code: Envelope protein 168 (170 aa).

M1 is a topological domain (intravirion). The helical transmembrane segment at 2–22 (FYPVVQILIGIILVIILILGF) threads the bilayer. Over 23 to 170 (YHLKRKPPKK…TVMGIARNVL (148 aa)) the chain is Virion surface.

This sequence belongs to the asfivirus envelope protein p22 family.

The protein localises to the virion membrane. It is found in the host cell membrane. The protein is Envelope protein 168 of African swine fever virus (isolate Tick/South Africa/Pretoriuskop Pr4/1996) (ASFV).